The chain runs to 448 residues: Alginate biosynthesis transcriptional regulatory protein AlgB (448 aa).

The 115-residue stretch at 10–124 (RILLVDDESA…QLRLATAKQL (115 aa)) folds into the Response regulatory domain. Asp59 carries the 4-aspartylphosphate modification. One can recognise a Sigma-54 factor interaction domain in the interval 147 to 376 (LDSHSPAMMA…LRNVVERASI (230 aa)). Residues 175 to 182 (GESGTGKG) and 238 to 247 (ADGGTLFLDE) each bind ATP. Residues 425–444 (LDQAAKTLGIDASTLYRKRK) constitute a DNA-binding region (H-T-H motif).

It functions in the pathway glycan biosynthesis; alginate biosynthesis [regulation]. Functionally, positive regulator of the alginate biosynthetic gene algD. This Pseudomonas putida (strain ATCC 47054 / DSM 6125 / CFBP 8728 / NCIMB 11950 / KT2440) protein is Alginate biosynthesis transcriptional regulatory protein AlgB (algB).